We begin with the raw amino-acid sequence, 213 residues long: Ribosomal RNA small subunit methyltransferase G (213 aa).

Residues Gly77, Met82, 104 to 106 (EKS), and Arg145 contribute to the S-adenosyl-L-methionine site.

Belongs to the methyltransferase superfamily. RNA methyltransferase RsmG family.

The protein localises to the cytoplasm. The catalysed reaction is guanosine(527) in 16S rRNA + S-adenosyl-L-methionine = N(7)-methylguanosine(527) in 16S rRNA + S-adenosyl-L-homocysteine. In terms of biological role, specifically methylates the N7 position of guanine in position 527 of 16S rRNA. In Pelagibacter ubique (strain HTCC1062), this protein is Ribosomal RNA small subunit methyltransferase G.